Consider the following 223-residue polypeptide: Adapter protein MecA (223 aa).

It belongs to the MecA family. Homodimer.

Functionally, enables the recognition and targeting of unfolded and aggregated proteins to the ClpC protease or to other proteins involved in proteolysis. This is Adapter protein MecA from Limosilactobacillus reuteri (strain DSM 20016) (Lactobacillus reuteri).